A 227-amino-acid polypeptide reads, in one-letter code: MFS-type transporter FVEG_08288 (227 aa).

A helical transmembrane segment spans residues 8 to 28 (VFLTVLIAIASCSVYILNIAI). N-linked (GlcNAc...) asparagine glycosylation is present at Asn40. A run of 5 helical transmembrane segments spans residues 43-63 (TVGL…MAGG), 100-120 (VANT…YYGV), 122-142 (FMVP…HFTL), 164-181 (FVRN…APWM), and 188-208 (YMMT…IWLI).

The protein belongs to the major facilitator superfamily.

The protein resides in the membrane. Its function is as follows. MFS-type transporter; part of the Fusarium detoxification of benzoxazolinone cluster 1 (FDB1) involved in the degradation of benzoxazolinones produced by the host plant. Maize, wheat, and rye produce the 2 benzoxazinone phytoanticipins 2,4-dihy-droxy-7-methoxy-1,4-benzoxazin-3-one (DIMBOA) and 2,4-dihydroxy-1,4-benzoxazin-3-one (DIBOA) that, due to their inherent instability once released, spontaneously degrade to the more stable corresponding benzoxazolinones, 6-methoxy-2-benzoxazolinone (MBOA) and 2-benzoxazolinone (BOA), respectively. The protein is MFS-type transporter FVEG_08288 of Gibberella moniliformis (strain M3125 / FGSC 7600) (Maize ear and stalk rot fungus).